A 400-amino-acid polypeptide reads, in one-letter code: Acyl-CoA dehydrogenase FadE26 (400 aa).

Residues 127-130 (IGYS), Thr136, and Ser162 contribute to the FAD site. The active-site Proton acceptor is Glu247. 380–382 (TNE) provides a ligand contact to FAD.

Belongs to the acyl-CoA dehydrogenase family. In terms of assembly, heterotetramer (dimer of heterodimers) composed of FadE26 and FadE27. FAD serves as cofactor.

The enzyme catalyses (25S)-3-oxocholest-4-en-26-oyl-CoA + A = 3-oxo-cholest-4,24-dien-26-oyl-CoA + AH2. It functions in the pathway steroid metabolism; cholesterol degradation. With respect to regulation, uncompetitively inhibited by high concentration of 3-OCS-CoA. Functionally, involved in the first cycle of side chain dehydrogenation in the beta-oxidation of cholesterol catabolism. It contributes partly to the virulence by increasing the efficiency of beta-oxidation. Catalyzes the dehydrogenation of acyl-CoA ester side chains of (25S)-3-oxo-cholest-4-en-26-oyl-CoA (3-OCS-CoA) to yield (24E)-3-oxo-cholest-4,24-dien-26-oyl-CoA. Also able to dehydrogenate steroyl-CoA such as 3-oxo-chol-4-en-24-oyl-CoA (3-OCO-CoA) as well as 3-oxo-4-pregnene-20-carboxyl-CoA (3-OPC-CoA). It dehydrogenates only (25S)-OCS-CoA diastereomer. This is Acyl-CoA dehydrogenase FadE26 (fadE26) from Mycobacterium tuberculosis (strain ATCC 25618 / H37Rv).